The primary structure comprises 388 residues: Probable mannan endo-1,4-beta-mannosidase A-1 (388 aa).

A signal peptide spans 1–20 (MKLSPLMALAGLASAQLALA). Substrate is bound by residues tryptophan 93 and asparagine 206. The active-site Proton donor is glutamate 207. Asparagine 264 carries N-linked (GlcNAc...) asparagine glycosylation. Tyrosine 282 is a binding site for substrate. Glutamate 315 (nucleophile) is an active-site residue. N-linked (GlcNAc...) asparagine glycosylation is present at asparagine 335. Residue tryptophan 345 coordinates substrate.

Belongs to the glycosyl hydrolase 5 (cellulase A) family.

The protein localises to the secreted. It carries out the reaction Random hydrolysis of (1-&gt;4)-beta-D-mannosidic linkages in mannans, galactomannans and glucomannans.. Functionally, endo-1,4-mannanase, a crucial enzyme for depolymerization of seed galactomannans and wood galactoglucomannans. This Aspergillus terreus (strain NIH 2624 / FGSC A1156) protein is Probable mannan endo-1,4-beta-mannosidase A-1 (manA-1).